We begin with the raw amino-acid sequence, 98 residues long: Integration host factor subunit alpha (98 aa).

The segment at 52–73 (FDLRQKSERPGRNPKTGEDIPI) is disordered. The span at 54-73 (LRQKSERPGRNPKTGEDIPI) shows a compositional bias: basic and acidic residues.

This sequence belongs to the bacterial histone-like protein family. As to quaternary structure, heterodimer of an alpha and a beta chain.

This protein is one of the two subunits of integration host factor, a specific DNA-binding protein that functions in genetic recombination as well as in transcriptional and translational control. The polypeptide is Integration host factor subunit alpha (Pseudoalteromonas atlantica (strain T6c / ATCC BAA-1087)).